Consider the following 753-residue polypeptide: 5-methyltetrahydropteroyltriglutamate--homocysteine methyltransferase (753 aa).

5-methyltetrahydropteroyltri-L-glutamate contacts are provided by residues 17–20 (RELK) and Lys117. L-homocysteine contacts are provided by residues 431-433 (IGS) and Glu484. Residues 431 to 433 (IGS) and Glu484 each bind L-methionine. 5-methyltetrahydropteroyltri-L-glutamate contacts are provided by residues 515-516 (RC) and Trp561. Position 599 (Asp599) interacts with L-homocysteine. Position 599 (Asp599) interacts with L-methionine. Glu605 is a 5-methyltetrahydropteroyltri-L-glutamate binding site. Zn(2+)-binding residues include His641, Cys643, and Glu665. His694 serves as the catalytic Proton donor. Cys726 provides a ligand contact to Zn(2+).

The protein belongs to the vitamin-B12 independent methionine synthase family. Zn(2+) is required as a cofactor.

It carries out the reaction 5-methyltetrahydropteroyltri-L-glutamate + L-homocysteine = tetrahydropteroyltri-L-glutamate + L-methionine. Its pathway is amino-acid biosynthesis; L-methionine biosynthesis via de novo pathway; L-methionine from L-homocysteine (MetE route): step 1/1. Catalyzes the transfer of a methyl group from 5-methyltetrahydrofolate to homocysteine resulting in methionine formation. The sequence is that of 5-methyltetrahydropteroyltriglutamate--homocysteine methyltransferase from Citrobacter koseri (strain ATCC BAA-895 / CDC 4225-83 / SGSC4696).